A 267-amino-acid polypeptide reads, in one-letter code: Undecaprenyl-diphosphatase (267 aa).

Helical transmembrane passes span 4-24, 41-61, 69-89, 96-116, 173-193, 207-227, and 239-259; these read LYALILGIIEGLTEFLPISST, FWKSFLIIIQLGSILAVIFVF, LDIWLKLAVGFFPTGVIGLFV, LFNGWVVVGMLIFGGVVFILI, AAEFSFLLAIPTMIIATAYSI, IPLGIGFITAFIVAVLVIKFF, and FGIYRIILGFVFFYLYYSGIL.

This sequence belongs to the UppP family.

The protein localises to the cell inner membrane. It catalyses the reaction di-trans,octa-cis-undecaprenyl diphosphate + H2O = di-trans,octa-cis-undecaprenyl phosphate + phosphate + H(+). Catalyzes the dephosphorylation of undecaprenyl diphosphate (UPP). Confers resistance to bacitracin. The chain is Undecaprenyl-diphosphatase from Campylobacter jejuni subsp. jejuni serotype O:23/36 (strain 81-176).